The following is a 285-amino-acid chain: Cyclin-Y-like protein 1B (285 aa).

The region spanning 111–209 is the Cyclin N-terminal domain; the sequence is PKRNCIFRHF…CFLELLEFNI (99 aa).

Belongs to the cyclin family. Cyclin Y subfamily.

This Homo sapiens (Human) protein is Cyclin-Y-like protein 1B.